Here is a 401-residue protein sequence, read N- to C-terminus: Hemorrhagic metalloproteinase-disintegrin-like kaouthiagin (401 aa).

Residues 14–208 (KYIEFYVIVD…DRPQCILNKP (195 aa)) form the Peptidase M12B domain. Ca(2+)-binding residues include glutamate 17 and aspartate 101. Residue asparagine 112 is glycosylated (N-linked (GlcNAc...) asparagine). Cystine bridges form between cysteine 125-cysteine 203, cysteine 164-cysteine 187, and cysteine 166-cysteine 171. Residue histidine 149 participates in Zn(2+) binding. Residue glutamate 150 is part of the active site. The Zn(2+) site is built by histidine 153 and histidine 159. Residues cysteine 203, asparagine 206, isoleucine 218, asparagine 221, phenylalanine 223, glutamate 225, glutamate 228, and aspartate 231 each contribute to the Ca(2+) site. Residues 216–285 (PAICGNYFVE…ECPTDSLQRN (70 aa)) form the Disintegrin domain. Intrachain disulfides connect cysteine 219/cysteine 248, cysteine 230/cysteine 243, cysteine 232/cysteine 238, cysteine 257/cysteine 277, cysteine 264/cysteine 296, cysteine 289/cysteine 301, cysteine 308/cysteine 358, cysteine 323/cysteine 366, cysteine 336/cysteine 346, cysteine 353/cysteine 389, and cysteine 383/cysteine 394. The D/ECD-tripeptide motif lies at 263–265 (DCD). 4 residues coordinate Ca(2+): aspartate 265, leucine 266, glutamate 268, and aspartate 280.

This sequence belongs to the venom metalloproteinase (M12B) family. P-III subfamily. P-IIIa sub-subfamily. As to quaternary structure, monomer. Zn(2+) serves as cofactor. Expressed by the venom gland.

The protein localises to the secreted. Functionally, snake venom zinc protease that inhibits hemostasis by binding and cleaving the vWF in humans. Also has and inhibitory effect on the collagen-induced platelet aggregation. The polypeptide is Hemorrhagic metalloproteinase-disintegrin-like kaouthiagin (Naja kaouthia (Monocled cobra)).